Reading from the N-terminus, the 270-residue chain is Proteasome subunit alpha type-1 (270 aa).

The interval 239–270 is disordered; sequence SMEAAEEAPAAEAESSSMQEEDKGTDAAPMDI. Positions 245–256 are enriched in low complexity; sequence EAPAAEAESSSM.

Belongs to the peptidase T1A family. As to quaternary structure, the 26S proteasome consists of a 20S proteasome core and two 19S regulatory subunits. The 20S proteasome core is composed of 28 subunits that are arranged in four stacked rings, resulting in a barrel-shaped structure. The two end rings are each formed by seven alpha subunits, and the two central rings are each formed by seven beta subunits. The catalytic chamber with the active sites is on the inside of the barrel.

It localises to the cytoplasm. It is found in the nucleus. The proteasome is a multicatalytic proteinase complex which is characterized by its ability to cleave peptides with Arg, Phe, Tyr, Leu, and Glu adjacent to the leaving group at neutral or slightly basic pH. The proteasome has an ATP-dependent proteolytic activity. This chain is Proteasome subunit alpha type-1 (PAF1), found in Oryza sativa subsp. japonica (Rice).